The sequence spans 332 residues: L-lactate dehydrogenase A chain (332 aa).

NAD(+) is bound by residues 29 to 57 and Arg99; that span reads GMVGMASAVSILLKDLCDELALVDVMEDK. Substrate-binding residues include Arg106, Asn138, and Arg169. Asn138 is an NAD(+) binding site. His193 (proton acceptor) is an active-site residue. Thr248 is a binding site for substrate.

Belongs to the LDH/MDH superfamily. LDH family. Homotetramer.

It is found in the cytoplasm. It carries out the reaction (S)-lactate + NAD(+) = pyruvate + NADH + H(+). The protein operates within fermentation; pyruvate fermentation to lactate; (S)-lactate from pyruvate: step 1/1. Functionally, interconverts simultaneously and stereospecifically pyruvate and lactate with concomitant interconversion of NADH and NAD(+). This is L-lactate dehydrogenase A chain (ldha) from Sphyraena lucasana (Lucas barracuda).